The primary structure comprises 513 residues: GMP synthase [glutamine-hydrolyzing] (513 aa).

The Glutamine amidotransferase type-1 domain maps to methionine 9 to glutamate 198. Catalysis depends on cysteine 86, which acts as the Nucleophile. Catalysis depends on residues histidine 172 and glutamate 174. The 190-residue stretch at tryptophan 199–arginine 388 folds into the GMPS ATP-PPase domain. Serine 226–serine 232 is an ATP binding site.

In terms of assembly, homodimer.

The catalysed reaction is XMP + L-glutamine + ATP + H2O = GMP + L-glutamate + AMP + diphosphate + 2 H(+). Its pathway is purine metabolism; GMP biosynthesis; GMP from XMP (L-Gln route): step 1/1. Catalyzes the synthesis of GMP from XMP. The chain is GMP synthase [glutamine-hydrolyzing] from Staphylococcus carnosus (strain TM300).